Consider the following 127-residue polypeptide: Probable glycine cleavage system H protein (127 aa).

The Lipoyl-binding domain occupies threonine 24–glutamate 106. Lysine 65 carries the post-translational modification N6-lipoyllysine.

It belongs to the GcvH family. As to quaternary structure, the glycine cleavage system is composed of four proteins: P, T, L and H. (R)-lipoate serves as cofactor.

Functionally, the glycine cleavage system catalyzes the degradation of glycine. The H protein shuttles the methylamine group of glycine from the P protein to the T protein. This is Probable glycine cleavage system H protein from Haloarcula marismortui (strain ATCC 43049 / DSM 3752 / JCM 8966 / VKM B-1809) (Halobacterium marismortui).